The following is a 563-amino-acid chain: Arginine--tRNA ligase (563 aa).

Positions 122–132 match the 'HIGH' region motif; that stretch reads PNIAKPISMGH.

It belongs to the class-I aminoacyl-tRNA synthetase family. Monomer.

It is found in the cytoplasm. It carries out the reaction tRNA(Arg) + L-arginine + ATP = L-arginyl-tRNA(Arg) + AMP + diphosphate. This is Arginine--tRNA ligase from Latilactobacillus sakei subsp. sakei (strain 23K) (Lactobacillus sakei subsp. sakei).